Consider the following 690-residue polypeptide: DNA ligase (690 aa).

NAD(+) is bound by residues Asp36–Asp40, Ser85–Leu86, and Glu124. Catalysis depends on Lys126, which acts as the N6-AMP-lysine intermediate. NAD(+) contacts are provided by Arg147, Glu184, Lys308, and Lys332. Cys426, Cys429, Cys444, and Cys449 together coordinate Zn(2+). Positions Asn614–Leu690 constitute a BRCT domain.

Belongs to the NAD-dependent DNA ligase family. LigA subfamily. Requires Mg(2+) as cofactor. Mn(2+) serves as cofactor.

The catalysed reaction is NAD(+) + (deoxyribonucleotide)n-3'-hydroxyl + 5'-phospho-(deoxyribonucleotide)m = (deoxyribonucleotide)n+m + AMP + beta-nicotinamide D-nucleotide.. Its function is as follows. DNA ligase that catalyzes the formation of phosphodiester linkages between 5'-phosphoryl and 3'-hydroxyl groups in double-stranded DNA using NAD as a coenzyme and as the energy source for the reaction. It is essential for DNA replication and repair of damaged DNA. The polypeptide is DNA ligase (Prochlorococcus marinus (strain NATL1A)).